A 690-amino-acid polypeptide reads, in one-letter code: Translation initiation factor IF-2 (690 aa).

Residues proline 178 to glutamate 346 form the tr-type G domain. The G1 stretch occupies residues glycine 187–threonine 194. Glycine 187–threonine 194 contacts GTP. The G2 stretch occupies residues glycine 212–serine 216. Residues aspartate 233–glycine 236 form a G3 region. GTP is bound by residues aspartate 233–histidine 237 and asparagine 287–aspartate 290. Residues asparagine 287–aspartate 290 are G4. The interval serine 324–arginine 326 is G5.

Belongs to the TRAFAC class translation factor GTPase superfamily. Classic translation factor GTPase family. IF-2 subfamily.

The protein localises to the cytoplasm. Its function is as follows. One of the essential components for the initiation of protein synthesis. Protects formylmethionyl-tRNA from spontaneous hydrolysis and promotes its binding to the 30S ribosomal subunits. Also involved in the hydrolysis of GTP during the formation of the 70S ribosomal complex. This chain is Translation initiation factor IF-2, found in Thermotoga sp. (strain RQ2).